A 771-amino-acid polypeptide reads, in one-letter code: Leucine-rich repeat and fibronectin type III domain-containing protein 1 (771 aa).

Residues 1–31 (MAPGPFSSALLSPPPAALPFLLLLWAGASRG) form the signal peptide. An LRRNT domain is found at 32 to 65 (QPCPGRCICQNVAPTLTMLCAKTGLLFVPPAIDR). Over 32 to 536 (QPCPGRCICQ…LRAHFLGGTM (505 aa)) the chain is Extracellular. LRR repeat units lie at residues 66–87 (RVVE…DFAN), 90–111 (SLVH…AFAD), 114–135 (ALRA…QLRG), 138–159 (NLRH…AFDA), 163–184 (TVED…AVGQ), 187–208 (NLNT…TFVQ), and 211–232 (KLVR…GLFL). N87 is a glycosylation site (N-linked (GlcNAc...) asparagine). In terms of domain architecture, LRRCT spans 252–298 (NPLHCNCELLWLRRLTREDDLETCATPEHLTDRYFWSIPEEEFLCEP). An Ig-like domain is found at 299 to 386 (PLITRQAGGR…GEATAPVEVC (88 aa)). A disulfide bridge connects residues C321 and C370. N-linked (GlcNAc...) asparagine glycosylation occurs at N343. Residues 397-422 (PAAPPPLTEPGSSDIATPGRPGANDS) are disordered. The region spanning 424–520 (AERRLVAAEL…GCVQFTTAGD (97 aa)) is the Fibronectin type-III domain. The helical transmembrane segment at 537–557 (IIAIGGVIVASVLVFIVLLMI) threads the bilayer. Over 558 to 771 (RYKVYGDGDS…STEWMLESTV (214 aa)) the chain is Cytoplasmic. A phosphoserine mark is found at S613 and S718. A disordered region spans residues 654-743 (PSEETSGEES…HLDGAGGGAA (90 aa)). The span at 719–732 (YPRRARRTKRHRST) shows a compositional bias: basic residues. The short motif at 768-771 (ESTV) is the PDZ-binding element.

This sequence belongs to the LRFN family. As to quaternary structure, can form heteromeric complexes with LRFN2, LRFN3, LRFN4 and LRFN5. Forms homomeric complexes, but not across cell junctions. Interacts with DLG1, DLG2, DLG3 and DLG4. Interacts with 2 AMPA receptor subunits GRIA1 and GRIA2 and NMDA receptor subunit GRIN1. In terms of processing, glycosylated.

The protein resides in the membrane. The protein localises to the synapse. It localises to the postsynaptic density membrane. In terms of biological role, promotes neurite outgrowth in hippocampal neurons. Involved in the regulation and maintenance of excitatory synapses. Induces the clustering of excitatory postsynaptic proteins, including DLG4, DLGAP1, GRIA1 and GRIN1. The chain is Leucine-rich repeat and fibronectin type III domain-containing protein 1 (LRFN1) from Homo sapiens (Human).